The following is a 412-amino-acid chain: Tyrosine--tRNA ligase (412 aa).

Tyr-38 lines the L-tyrosine pocket. The 'HIGH' region signature appears at 43–52 (CTANSLHIGS). L-tyrosine-binding residues include Tyr-170 and Gln-174. Residues 230-234 (KMGKT) carry the 'KMSKS' region motif. Residue Lys-233 coordinates ATP. The S4 RNA-binding domain maps to 343–409 (IPISKLLHMW…CGKKRRLKVV (67 aa)).

It belongs to the class-I aminoacyl-tRNA synthetase family. TyrS type 1 subfamily. As to quaternary structure, homodimer.

The protein resides in the cytoplasm. It carries out the reaction tRNA(Tyr) + L-tyrosine + ATP = L-tyrosyl-tRNA(Tyr) + AMP + diphosphate + H(+). Its function is as follows. Catalyzes the attachment of tyrosine to tRNA(Tyr) in a two-step reaction: tyrosine is first activated by ATP to form Tyr-AMP and then transferred to the acceptor end of tRNA(Tyr). This chain is Tyrosine--tRNA ligase, found in Anaplasma phagocytophilum (strain HZ).